Consider the following 529-residue polypeptide: Bifunctional purine biosynthesis protein PurH (529 aa).

Residues 1-148 (MQQRRPIRRA…KNHKDVAIVV (148 aa)) form the MGS-like domain.

The protein belongs to the PurH family.

It carries out the reaction (6R)-10-formyltetrahydrofolate + 5-amino-1-(5-phospho-beta-D-ribosyl)imidazole-4-carboxamide = 5-formamido-1-(5-phospho-D-ribosyl)imidazole-4-carboxamide + (6S)-5,6,7,8-tetrahydrofolate. It catalyses the reaction IMP + H2O = 5-formamido-1-(5-phospho-D-ribosyl)imidazole-4-carboxamide. It functions in the pathway purine metabolism; IMP biosynthesis via de novo pathway; 5-formamido-1-(5-phospho-D-ribosyl)imidazole-4-carboxamide from 5-amino-1-(5-phospho-D-ribosyl)imidazole-4-carboxamide (10-formyl THF route): step 1/1. The protein operates within purine metabolism; IMP biosynthesis via de novo pathway; IMP from 5-formamido-1-(5-phospho-D-ribosyl)imidazole-4-carboxamide: step 1/1. The protein is Bifunctional purine biosynthesis protein PurH of Pectobacterium carotovorum subsp. carotovorum (strain PC1).